The sequence spans 160 residues: Interleukin-36 alpha (160 aa).

Positions 1–7 (MNKEKEL) are excised as a propeptide. A 3'-nitrotyrosine modification is found at Tyr-98.

This sequence belongs to the IL-1 family. As to quaternary structure, interacts with TMED10; the interaction mediates the translocation from the cytoplasm into the ERGIC (endoplasmic reticulum-Golgi intermediate compartment) and thereby secretion. In terms of processing, N-terminal truncation leads to a dramatic enhancement of its activity (&gt;1000-fold). Highly expressed in embryonic tissue and in tissues containing epithelial cells. Elevated expression levels are detected in chronic kidney disease; expressed inepithelia from the distal convoluted tubules (DCTs) to the cortical collecting ducts (CCDs) in single nephrons (at protein level).

The protein localises to the cytoplasm. It localises to the secreted. Its function is as follows. Cytokine that binds to and signals through the IL1RL2/IL-36R receptor which in turn activates NF-kappa-B and MAPK signaling pathways in target cells linked to a pro-inflammatory response. Part of the IL-36 signaling system that is thought to be present in epithelial barriers and to take part in local inflammatory response; similar to the IL-1 system with which it shares the coreceptor IL1RAP. Seems to be involved in skin inflammatory response by acting on keratinocytes, dendritic cells and indirectly on T-cells to drive tissue infiltration, cell maturation and cell proliferation. Induces the production of pro-inflammatory cytokines, including IL-12, Il-1 beta, IL-6, TNF-alpha and IL-23 in bone marrow-derived dendritic cells (BMDCs). Involved in dendritic cell maturation by stimulating the surface expression of CD80, CD86 and MHC class II. Induces the production of IFN-gamma, IL-4 and IL-17 by cultured CD4(+) T-cells and splenocytes. May play a role in pro-inflammatory effects in the lung: induces the expression of CXCL1 and CXCL2 in the lung, and the expression of TNF-alpha, IL-36c, IL-1A, IL-1B, CXCL1 and CXCL2 in isolated splenic CD11c(+) alveolar macrophages. May be involved in T-cell maturation by stimulating the surface expression of CD40 and modestly CD80 and CD86 in splenic CD11c(+) cells. May be involved in CD4(+) T-cell proliferation. Induces NF-kappa B activation in macrophages. In Mus musculus (Mouse), this protein is Interleukin-36 alpha.